The primary structure comprises 184 residues: Peptide deformylase (184 aa).

Residues Cys111 and His154 each coordinate Fe cation. Glu155 is a catalytic residue. His158 is a Fe cation binding site.

The protein belongs to the polypeptide deformylase family. Fe(2+) is required as a cofactor.

It catalyses the reaction N-terminal N-formyl-L-methionyl-[peptide] + H2O = N-terminal L-methionyl-[peptide] + formate. Functionally, removes the formyl group from the N-terminal Met of newly synthesized proteins. Requires at least a dipeptide for an efficient rate of reaction. N-terminal L-methionine is a prerequisite for activity but the enzyme has broad specificity at other positions. The polypeptide is Peptide deformylase (Lactobacillus gasseri (strain ATCC 33323 / DSM 20243 / BCRC 14619 / CIP 102991 / JCM 1131 / KCTC 3163 / NCIMB 11718 / NCTC 13722 / AM63)).